The sequence spans 251 residues: tRNA (guanine-N(7)-)-methyltransferase (251 aa).

Positions 80, 105, 132, and 155 each coordinate S-adenosyl-L-methionine. Residue Asp-155 is part of the active site. Substrate-binding positions include Lys-159, Asp-191, and 228–231 (TKFE).

This sequence belongs to the class I-like SAM-binding methyltransferase superfamily. TrmB family.

It catalyses the reaction guanosine(46) in tRNA + S-adenosyl-L-methionine = N(7)-methylguanosine(46) in tRNA + S-adenosyl-L-homocysteine. Its pathway is tRNA modification; N(7)-methylguanine-tRNA biosynthesis. Catalyzes the formation of N(7)-methylguanine at position 46 (m7G46) in tRNA. The chain is tRNA (guanine-N(7)-)-methyltransferase from Histophilus somni (strain 2336) (Haemophilus somnus).